A 192-amino-acid polypeptide reads, in one-letter code: Fe/S biogenesis protein NfuA (192 aa).

Residues cysteine 149 and cysteine 152 each contribute to the [4Fe-4S] cluster site.

The protein belongs to the NfuA family. In terms of assembly, homodimer. [4Fe-4S] cluster is required as a cofactor.

In terms of biological role, involved in iron-sulfur cluster biogenesis. Binds a 4Fe-4S cluster, can transfer this cluster to apoproteins, and thereby intervenes in the maturation of Fe/S proteins. Could also act as a scaffold/chaperone for damaged Fe/S proteins. This chain is Fe/S biogenesis protein NfuA, found in Shewanella pealeana (strain ATCC 700345 / ANG-SQ1).